We begin with the raw amino-acid sequence, 442 residues long: Trigger factor (442 aa).

A PPIase FKBP-type domain is found at 163–248; sequence YDRVTINYCI…IIKIEKKQEL (86 aa).

This sequence belongs to the FKBP-type PPIase family. Tig subfamily.

It is found in the cytoplasm. The enzyme catalyses [protein]-peptidylproline (omega=180) = [protein]-peptidylproline (omega=0). In terms of biological role, involved in protein export. Acts as a chaperone by maintaining the newly synthesized protein in an open conformation. Functions as a peptidyl-prolyl cis-trans isomerase. The sequence is that of Trigger factor from Buchnera aphidicola subsp. Acyrthosiphon pisum (strain 5A).